Consider the following 234-residue polypeptide: Pepsin inhibitor Dit33 (234 aa).

A signal peptide spans 1–17; it reads MKILFCFVLLAIAALRA. A disulfide bridge connects residues Cys-135 and Cys-230. The tract at residues 200–222 is disordered; that stretch reads RHETSSQPSDATTISTTTQAPVE. Residues 204–219 show a composition bias toward polar residues; it reads SSQPSDATTISTTTQA.

Belongs to the protease inhibitor I33 family.

Its subcellular location is the secreted. Its function is as follows. Aspartyl protease inhibitor. The chain is Pepsin inhibitor Dit33 (DIT33) from Dirofilaria immitis (Canine heartworm).